The sequence spans 228 residues: MQTLEQLTSPEHSAWITLSQWIDNARNHCEVIKKDQSSAERELFTMQMPTSSPMGAVIYETGGILIHYGWLRILGSGSFKLPRGLMDWNFSKSFSESGEKPKYLLVADDVIGGYFALNGGSLGNNIGKIYYYSSKDLTWHNLNFTYTEFLAWVLNGDVEAFYQGLFWKNWQDDVKQLDGNQVFVFTPDLNQDRKIAIDERQKQEVNIETHYQANFAEKNKFDLAYSVA.

This sequence to E.coli YbfG.

This is an uncharacterized protein from Haemophilus influenzae (strain ATCC 51907 / DSM 11121 / KW20 / Rd).